We begin with the raw amino-acid sequence, 901 residues long: Quinate repressor protein (901 aa).

Positions 1–88 (MSILVRPPKR…DSLQTRRKFP (88 aa)) are sufficient for repression. Disordered stretches follow at residues 26–59 (LRDF…DGSR) and 878–901 (EEQG…GQPM). Positions 31 to 43 (QGNSASTPINTSA) are enriched in polar residues.

This sequence in the N-terminal section; belongs to the shikimate kinase family. The protein in the 2nd section; belongs to the type-I 3-dehydroquinase family. It in the C-terminal section; belongs to the shikimate dehydrogenase family. As to quaternary structure, interacts with qutA; transcriptional activator of the quinate utilization pathway genes.

Its function is as follows. Multi-domain repressor protein that negatively regulates transcription of the quinate utilization pathway genes. May mediate its repressor activity by binding directly to the qutA activator protein. The protein is Quinate repressor protein (qutR) of Emericella nidulans (strain FGSC A4 / ATCC 38163 / CBS 112.46 / NRRL 194 / M139) (Aspergillus nidulans).